Reading from the N-terminus, the 222-residue chain is 7-cyano-7-deazaguanine synthase (222 aa).

8–18 (LSGGLDSTTCL) is a binding site for ATP. Zn(2+)-binding residues include Cys186, Cys194, Cys197, and Cys200.

It belongs to the QueC family. In terms of assembly, homodimer. The cofactor is Zn(2+).

The enzyme catalyses 7-carboxy-7-deazaguanine + NH4(+) + ATP = 7-cyano-7-deazaguanine + ADP + phosphate + H2O + H(+). It functions in the pathway purine metabolism; 7-cyano-7-deazaguanine biosynthesis. Catalyzes the ATP-dependent conversion of 7-carboxy-7-deazaguanine (CDG) to 7-cyano-7-deazaguanine (preQ(0)). The protein is 7-cyano-7-deazaguanine synthase of Acetivibrio thermocellus (strain ATCC 27405 / DSM 1237 / JCM 9322 / NBRC 103400 / NCIMB 10682 / NRRL B-4536 / VPI 7372) (Clostridium thermocellum).